The chain runs to 150 residues: MRVLVQRVKEASVKSGDYYGSVQKGLLLLVGVHELSTESDADALADKIVKSRIFEDDAGKMNLSVQDIAGEILSISQFTLYADVKKGNRPSFTKAMQPQKAEQIYHYFNTQLKNKGLKVVQGCFGEMMDIALINEGPVTIMYESKDGKLV.

The short motif at glycine 136–proline 137 is the Gly-cisPro motif, important for rejection of L-amino acids element.

Belongs to the DTD family. As to quaternary structure, homodimer.

It localises to the cytoplasm. The enzyme catalyses glycyl-tRNA(Ala) + H2O = tRNA(Ala) + glycine + H(+). The catalysed reaction is a D-aminoacyl-tRNA + H2O = a tRNA + a D-alpha-amino acid + H(+). Its function is as follows. An aminoacyl-tRNA editing enzyme that deacylates mischarged D-aminoacyl-tRNAs. Also deacylates mischarged glycyl-tRNA(Ala), protecting cells against glycine mischarging by AlaRS. Acts via tRNA-based rather than protein-based catalysis; rejects L-amino acids rather than detecting D-amino acids in the active site. By recycling D-aminoacyl-tRNA to D-amino acids and free tRNA molecules, this enzyme counteracts the toxicity associated with the formation of D-aminoacyl-tRNA entities in vivo and helps enforce protein L-homochirality. The protein is D-aminoacyl-tRNA deacylase of Macrococcus caseolyticus (strain JCSC5402) (Macrococcoides caseolyticum).